A 397-amino-acid polypeptide reads, in one-letter code: Ribosomal RNA processing protein 1 homolog (397 aa).

The span at 334-343 (EAAEAARQEN) shows a compositional bias: basic and acidic residues. The interval 334–366 (EAAEAARQENGDDVPDDEIAEVKKGNGKKTAVP) is disordered.

Belongs to the RRP1 family.

The protein localises to the nucleus. Its function is as follows. May be involved in the generation of 28S rRNA. The protein is Ribosomal RNA processing protein 1 homolog of Caenorhabditis elegans.